A 398-amino-acid chain; its full sequence is Isopenicillin N epimerase (398 aa).

K219 bears the N6-(pyridoxal phosphate)lysine mark. The interval 243-264 (PQVSWGYRPDGENPSDERNRFG) is disordered. Residues 251 to 264 (PDGENPSDERNRFG) show a composition bias toward basic and acidic residues.

The protein belongs to the class-V pyridoxal-phosphate-dependent aminotransferase family. Requires pyridoxal 5'-phosphate as cofactor.

The enzyme catalyses isopenicillin N = penicillin N. It functions in the pathway antibiotic biosynthesis; cephalosporin C biosynthesis. In terms of biological role, catalyzes the reversible isomerization between isopenicillin N and penicillin N. The sequence is that of Isopenicillin N epimerase (cefD) from Amycolatopsis lactamdurans (Nocardia lactamdurans).